Consider the following 79-residue polypeptide: ATP synthase subunit c (79 aa).

Helical transmembrane passes span 10-30 (IAGA…IGVL) and 52-72 (FFIV…LAMY).

Belongs to the ATPase C chain family. As to quaternary structure, F-type ATPases have 2 components, F(1) - the catalytic core - and F(0) - the membrane proton channel. F(1) has five subunits: alpha(3), beta(3), gamma(1), delta(1), epsilon(1). F(0) has three main subunits: a(1), b(2) and c(10-14). The alpha and beta chains form an alternating ring which encloses part of the gamma chain. F(1) is attached to F(0) by a central stalk formed by the gamma and epsilon chains, while a peripheral stalk is formed by the delta and b chains.

It localises to the cell inner membrane. Functionally, f(1)F(0) ATP synthase produces ATP from ADP in the presence of a proton or sodium gradient. F-type ATPases consist of two structural domains, F(1) containing the extramembraneous catalytic core and F(0) containing the membrane proton channel, linked together by a central stalk and a peripheral stalk. During catalysis, ATP synthesis in the catalytic domain of F(1) is coupled via a rotary mechanism of the central stalk subunits to proton translocation. In terms of biological role, key component of the F(0) channel; it plays a direct role in translocation across the membrane. A homomeric c-ring of between 10-14 subunits forms the central stalk rotor element with the F(1) delta and epsilon subunits. The sequence is that of ATP synthase subunit c from Thiobacillus denitrificans (strain ATCC 25259 / T1).